Reading from the N-terminus, the 59-residue chain is UPF0434 protein lpg1920 (59 aa).

It belongs to the UPF0434 family.

The sequence is that of UPF0434 protein lpg1920 from Legionella pneumophila subsp. pneumophila (strain Philadelphia 1 / ATCC 33152 / DSM 7513).